The chain runs to 209 residues: Octanoyltransferase (209 aa).

The BPL/LPL catalytic domain maps to 30–209 (GEAPEAVYLV…LEVEFIKIFK (180 aa)). Residues 69-76 (RGGKFTFH), 143-145 (AIG), and 156-158 (GIA) each bind substrate. Cys-174 acts as the Acyl-thioester intermediate in catalysis.

It belongs to the LipB family.

The protein localises to the cytoplasm. The catalysed reaction is octanoyl-[ACP] + L-lysyl-[protein] = N(6)-octanoyl-L-lysyl-[protein] + holo-[ACP] + H(+). It participates in protein modification; protein lipoylation via endogenous pathway; protein N(6)-(lipoyl)lysine from octanoyl-[acyl-carrier-protein]: step 1/2. In terms of biological role, catalyzes the transfer of endogenously produced octanoic acid from octanoyl-acyl-carrier-protein onto the lipoyl domains of lipoate-dependent enzymes. Lipoyl-ACP can also act as a substrate although octanoyl-ACP is likely to be the physiological substrate. The chain is Octanoyltransferase from Rickettsia bellii (strain OSU 85-389).